The primary structure comprises 195 residues: MAHGPNYKVKYRRRREGKTNYYRRYTYVLNRSDRVVVRLTNKYVIVQFVKFDPKGDITVAAAHSRELMKFGWKGDENNSTACYLTGYLAGLRAKKAGMTSASADLGLFTPTKGARIFYVLKGVIDSGVKVPMGDVGVNNDRLAGKHIAEYAKKLEQEDPDKYRGLFSRYLARGLDPKDLPAHFKEVLNSIKSGEK.

Belongs to the universal ribosomal protein uL18 family. Part of the 50S ribosomal subunit. Contacts the 5S and 23S rRNAs.

In terms of biological role, this is one of the proteins that bind and probably mediate the attachment of the 5S RNA into the large ribosomal subunit, where it forms part of the central protuberance. The sequence is that of Large ribosomal subunit protein uL18 from Metallosphaera sedula (strain ATCC 51363 / DSM 5348 / JCM 9185 / NBRC 15509 / TH2).